A 126-amino-acid chain; its full sequence is Desulfoferrodoxin (126 aa).

Residues Cys-10, Cys-13, Cys-29, Cys-30, His-49, His-69, His-75, Cys-116, and His-119 each coordinate Fe cation.

This sequence belongs to the desulfoferrodoxin family. In terms of assembly, homodimer. Fe(3+) is required as a cofactor. Requires Cu(2+) as cofactor.

It catalyses the reaction reduced [rubredoxin] + superoxide + 2 H(+) = oxidized [rubredoxin] + H2O2. Functionally, catalyzes the one-electron reduction of superoxide anion radical to hydrogen peroxide at a nonheme ferrous iron center. Plays a fundamental role in case of oxidative stress via its superoxide detoxification activity. This Desulfarculus baarsii (strain ATCC 33931 / DSM 2075 / LMG 7858 / VKM B-1802 / 2st14) protein is Desulfoferrodoxin (dfx).